The following is a 310-amino-acid chain: MSDTNNHSKNIIHRILTEQINLTSNELDTKSTKEIVNIFSEADKEPQKAVERVIPELINAIDEITARLKSKGRLFYIGAGTSGRLGVLDASECPPTFCSNPDLVQGIIAGGIPSLTRSSEHLEDVSEIAIADLKDRNFSYRDVLIGITASGRTPYVIAALNYSKSISALSISISSVPESDSTLDNDIDIRLITGPEILAGSTRLKAGTATKMALNIISTSVMIKLGKVYGNRMIDLSVSNDKLLDRAIGILFDIGSVDKDTAVRLLKKTNGSVKLSLLIALSGMDVIDAKQLLNDSKGNLRTALISFKDN.

The SIS domain maps to 64-227 (ITARLKSKGR…STSVMIKLGK (164 aa)). Glu92 serves as the catalytic Proton donor. Glu123 is a catalytic residue.

The protein belongs to the GCKR-like family. MurNAc-6-P etherase subfamily. In terms of assembly, homodimer.

The enzyme catalyses N-acetyl-D-muramate 6-phosphate + H2O = N-acetyl-D-glucosamine 6-phosphate + (R)-lactate. It participates in amino-sugar metabolism; N-acetylmuramate degradation. Functionally, specifically catalyzes the cleavage of the D-lactyl ether substituent of MurNAc 6-phosphate, producing GlcNAc 6-phosphate and D-lactate. The chain is N-acetylmuramic acid 6-phosphate etherase from Prochlorococcus marinus (strain NATL1A).